The chain runs to 184 residues: GMP synthase [glutamine-hydrolyzing] subunit A (184 aa).

The 182-residue stretch at 3-184 (PICVVNNYGQ…YENFDAICTE (182 aa)) folds into the Glutamine amidotransferase type-1 domain. Cys-75 acts as the Nucleophile in catalysis. Residues His-162 and Glu-164 contribute to the active site.

Heterodimer composed of a glutamine amidotransferase subunit (A) and a GMP-binding subunit (B).

The enzyme catalyses XMP + L-glutamine + ATP + H2O = GMP + L-glutamate + AMP + diphosphate + 2 H(+). Its pathway is purine metabolism; GMP biosynthesis; GMP from XMP (L-Gln route): step 1/1. Functionally, catalyzes the synthesis of GMP from XMP. In Methanoregula boonei (strain DSM 21154 / JCM 14090 / 6A8), this protein is GMP synthase [glutamine-hydrolyzing] subunit A.